The primary structure comprises 491 residues: 4,4'-diapolycopen-4-al dehydrogenase (491 aa).

Glu208 is a catalytic residue.

The protein belongs to the carotenoid/retinoid oxidoreductase family. CrtN subfamily.

The catalysed reaction is all-trans-4,4'-diapolycopen-4-al + A + H2O = all-trans-4,4'-diapolycopen-4-oate + AH2 + H(+). It participates in carotenoid biosynthesis. In terms of biological role, involved in the biosynthesis of the major C30 carotenoid methyl 4'-[6-O-(acylglycosyl)oxy]-4,4'-diapolycopen-4-oic acid via 4,4'-diapolycopen-4-oic acid intermediate. Catalyzes the oxidation of 4,4'-diapolycopen-4-al to yield 4,4'-diapolycopen-4-oic acid. The sequence is that of 4,4'-diapolycopen-4-al dehydrogenase from Metabacillus indicus (Bacillus indicus).